We begin with the raw amino-acid sequence, 178 residues long: Fatty-acid and retinol-binding protein 1 (178 aa).

The N-terminal stretch at 1–16 is a signal peptide; the sequence is MYHQLILMALIGVIMA. N-linked (GlcNAc...) asparagine glycosylation is found at asparagine 44 and asparagine 75. Coiled-coil stretches lie at residues 67–89 and 122–154; these read DAAL…ELRN and QKLD…LKAT. Asparagine 157 is a glycosylation site (N-linked (GlcNAc...) asparagine).

The protein belongs to the fatty-acid and retinol-binding protein (FARBP) family. N-glycosylated.

It localises to the secreted. Binds retinol and different fatty acids. The sequence is that of Fatty-acid and retinol-binding protein 1 from Onchocerca ochengi (Filarial nematode worm).